A 386-amino-acid chain; its full sequence is uncharacterized protein (386 aa).

2 helical membrane-spanning segments follow: residues 54–74 and 347–367; these read AVLQ…AIVA and LLGG…PIAG.

This sequence to M.tuberculosis Rv0628c.

The protein resides in the cell membrane. This is an uncharacterized protein from Mycobacterium tuberculosis (strain CDC 1551 / Oshkosh).